We begin with the raw amino-acid sequence, 364 residues long: Probable cysteine protease RDL4 (364 aa).

The signal sequence occupies residues 1–23; the sequence is MGSAKSAMLILLVAMVIASCATA. Residues 24–136 constitute a propeptide, activation peptide; sequence IDMSVVSYDD…DRYKTSADDV (113 aa). An N-linked (GlcNAc...) asparagine glycan is attached at Asn87. Intrachain disulfides connect Cys158-Cys199, Cys192-Cys232, and Cys291-Cys342. Cys161 is an active-site residue. Residues His297 and Asn317 contribute to the active site.

It belongs to the peptidase C1 family. In terms of tissue distribution, expressed in inflorescences.

Its function is as follows. Probable thiol protease. This is Probable cysteine protease RDL4 from Arabidopsis thaliana (Mouse-ear cress).